The primary structure comprises 120 residues: Large ribosomal subunit protein eL8 (120 aa).

Belongs to the eukaryotic ribosomal protein eL8 family. In terms of assembly, part of the 50S ribosomal subunit. Probably part of the RNase P complex.

Its subcellular location is the cytoplasm. Its function is as follows. Multifunctional RNA-binding protein that recognizes the K-turn motif in ribosomal RNA, the RNA component of RNase P, box H/ACA, box C/D and box C'/D' sRNAs. The sequence is that of Large ribosomal subunit protein eL8 from Haloquadratum walsbyi (strain DSM 16790 / HBSQ001).